The chain runs to 124 residues: Large ribosomal subunit protein uL18 (124 aa).

This sequence belongs to the universal ribosomal protein uL18 family. Part of the 50S ribosomal subunit; part of the 5S rRNA/L5/L18/L25 subcomplex. Contacts the 5S and 23S rRNAs.

In terms of biological role, this is one of the proteins that bind and probably mediate the attachment of the 5S RNA into the large ribosomal subunit, where it forms part of the central protuberance. The protein is Large ribosomal subunit protein uL18 of Orientia tsutsugamushi (strain Boryong) (Rickettsia tsutsugamushi).